Here is a 493-residue protein sequence, read N- to C-terminus: MTVRTRIAPSPTGDPHVGTAYVALFNLCFARQHGGQFILRIEDTDQARSTAESEQDILTALRWLGLNWDEGPDVGGPHGPYRQSERKHMYGQYAEDLVTAGHAFYCFRTPEELDAIREERKAQGLNPGIKGDLELPEEEVKRRLDAGDPYVIRMKVPDEGVCEIQDMLRGTIEIDWAQVDCQILLKSDGMPTYHLANVVDDHLMGITHVLRGEEWINSAPKHKLLYQYFGWDMPELCHLPLLRNPDKSKLSKRKNPTSINFYERMGFLPEAVTNYLGRMGWSMPDEREKFTLDEMIENFDIQRVSLGGPVFDVEKLRWLNGQWIREELSDEQFMARMQQWWFNQDDLKALVPHIKGRAEVFSDVAPMAQFMFSGMLNLKPEDFAHNKLDESQVKRVLQFALWKLEAQRHWSKNTIFADIKALAKAMDLKMGDFMFSIFVAIAGTPNSWSVMDSMALLGPDMTRSRLRHALEVMGGFSKKETKKVEKEYAALGV.

Positions 9–19 match the 'HIGH' region motif; that stretch reads PSPTGDPHVGT. Residues 249-253 carry the 'KMSKS' region motif; that stretch reads KLSKR. Lys-252 lines the ATP pocket.

Belongs to the class-I aminoacyl-tRNA synthetase family. Glutamate--tRNA ligase type 1 subfamily. In terms of assembly, monomer.

It is found in the cytoplasm. It carries out the reaction tRNA(Glu) + L-glutamate + ATP = L-glutamyl-tRNA(Glu) + AMP + diphosphate. Functionally, catalyzes the attachment of glutamate to tRNA(Glu) in a two-step reaction: glutamate is first activated by ATP to form Glu-AMP and then transferred to the acceptor end of tRNA(Glu). The chain is Glutamate--tRNA ligase from Marinobacter nauticus (strain ATCC 700491 / DSM 11845 / VT8) (Marinobacter aquaeolei).